The following is a 418-amino-acid chain: Glutamyl-tRNA reductase (418 aa).

Residues 49 to 52 (TCNR), serine 109, 114 to 116 (EPQ), and glutamine 120 contribute to the substrate site. Cysteine 50 (nucleophile) is an active-site residue. 189 to 194 (GAGETI) contacts NADP(+).

It belongs to the glutamyl-tRNA reductase family. Homodimer.

The catalysed reaction is (S)-4-amino-5-oxopentanoate + tRNA(Glu) + NADP(+) = L-glutamyl-tRNA(Glu) + NADPH + H(+). It participates in porphyrin-containing compound metabolism; protoporphyrin-IX biosynthesis; 5-aminolevulinate from L-glutamyl-tRNA(Glu): step 1/2. Catalyzes the NADPH-dependent reduction of glutamyl-tRNA(Glu) to glutamate 1-semialdehyde (GSA). This is Glutamyl-tRNA reductase from Escherichia coli O7:K1 (strain IAI39 / ExPEC).